Reading from the N-terminus, the 292-residue chain is Malonyl-S-ACP:biotin-protein carboxyltransferase MADD (292 aa).

Positions 1–281 (MEIMMGQGRL…RGKVMAMMDK (281 aa)) constitute a CoA carboxyltransferase C-terminal domain.

It localises to the cytoplasm. The catalysed reaction is N(6)-biotinyl-L-lysyl-[protein] + malonyl-[ACP] = N(6)-carboxybiotinyl-L-lysyl-[protein] + acetyl-[ACP]. Gamma subunit of the biotin-dependent malonate decarboxylase multienzyme complex (EC 7.2.4.4). The two subunits MADC and MADD are required for the transfer of the malonate carboxy group from the acyl-carrier protein (ACP) to the prosthetic group of the biotin carrier MADF. Required for the regeneration of ACP. The chain is Malonyl-S-ACP:biotin-protein carboxyltransferase MADD (madD) from Malonomonas rubra.